Here is a 3414-residue protein sequence, read N- to C-terminus: Genome polyprotein (3414 aa).

Residues 1–30 (MVKKAILKGKGGGPPRRVSKETATKTRQPR) form a disordered region. Residues 2 to 98 (VKKAILKGKG…LQKRGKRRSA (97 aa)) lie on the Cytoplasmic side of the membrane. A propeptide spans 97-117 (SATDWMSWLLVITLLGMTLAA) (ER anchor for the capsid protein C, removed in mature form by serine protease NS3). Residues 99–119 (TDWMSWLLVITLLGMTLAATV) traverse the membrane as a helical segment. Residues 120–242 (RKERDGSTVI…HLTRVEGWVW (123 aa)) are Extracellular-facing. A glycan (N-linked (GlcNAc...) asparagine; by host) is linked at Asn-144. A helical transmembrane segment spans residues 243 to 260 (KNKLLALAMVTVVWLTLE). Ser-261 is a topological domain (cytoplasmic). A helical transmembrane segment spans residues 262 to 280 (VVTRVAVLVVLLCLAPVYA). At 281 to 727 (SRCTHLENRD…HTVLGGAFNS (447 aa)) the chain is on the extracellular side. Cystine bridges form between Cys-283–Cys-310, Cys-340–Cys-396, Cys-340–Cys-401, Cys-354–Cys-385, Cys-372–Cys-396, and Cys-372–Cys-401. A fusion peptide region spans residues 378–391 (DRGWGNHCGLFGKG). N-linked (GlcNAc...) asparagine; by host glycosylation is present at Asn-434. Disulfide bonds link Cys-466/Cys-570 and Cys-587/Cys-618. A helical transmembrane segment spans residues 728–748 (IFGGVGFLPKLLLGVALAWLG). The Extracellular portion of the chain corresponds to 749–755 (LNMRNPT). Residues 756–776 (MSMSFLLAGGLVLAMTLGVGA) traverse the membrane as a helical segment. Residues 777-1132 (DVGCAVDTER…RSMVVADNGE (356 aa)) lie on the Extracellular side of the membrane. Disulfide bonds link Cys-780–Cys-791, Cys-831–Cys-920, Cys-955–Cys-1000, Cys-1057–Cys-1106, Cys-1068–Cys-1090, and Cys-1089–Cys-1093. N-linked (GlcNAc...) asparagine; by host glycans are attached at residues Asn-861, Asn-983, and Asn-999. A helical transmembrane segment spans residues 1133–1153 (LLSEGGVPGIVALFVVLEYII). Residues 1154–1158 (RRRPS) lie on the Cytoplasmic side of the membrane. Residues 1159 to 1179 (TGTTVVWGGIVVLALLVTGMV) form a helical membrane-spanning segment. The Lumenal portion of the chain corresponds to 1180–1187 (RIESLVRY). The chain crosses the membrane as a helical span at residues 1188 to 1208 (VVAVGITFHLELGPEIVALML). The Cytoplasmic segment spans residues 1209 to 1293 (LQAVFELRVG…LLMALMTQQD (85 aa)). Residues 1294–1314 (VVTVHHGLVCFLSVASACSVW) traverse the membrane as a helical segment. At 1315 to 1327 (RLLKGHREQKGLT) the chain is on the lumenal side. Residues 1328-1348 (WVVPLAGLLGGEGSGIRLLAF) traverse the membrane as a helical segment. The Cytoplasmic portion of the chain corresponds to 1349 to 1359 (WELSAHRGRRS). The helical transmembrane segment at 1360-1378 (FSEPLTVVGVMLTLASGMM) threads the bilayer. Topologically, residues 1379–1382 (RHTS) are lumenal. The chain crosses the membrane as a helical span at residues 1383 to 1403 (QEALCALAVASFLLLMLVLGT). Topologically, residues 1404 to 1454 (RKMQLVAEWSGCVEWYPELVNEGGEVSLRVRQDAMGNFHLTELEKEERMMA) are cytoplasmic. The segment at 1410–1449 (AEWSGCVEWYPELVNEGGEVSLRVRQDAMGNFHLTELEKE) is interacts with and activates NS3 protease. The helical intramembrane region spans 1455–1475 (FWLIAGLAASAIHWSGILGVM). Over 1476–2160 (GLWTLTEMLR…RMAERDAPEA (685 aa)) the chain is Cytoplasmic. The region spanning 1490 to 1669 (SDLVFSGQGG…EAEKSRPNLP (180 aa)) is the Peptidase S7 domain. Active-site charge relay system; for serine protease NS3 activity residues include His-1543, Asp-1567, and Ser-1627. The Helicase ATP-binding domain occupies 1675 to 1831 (TGWTSKGQIT…ESNGAITSEE (157 aa)). 1688-1695 (MHPGSGKT) is a binding site for ATP. The DEAH box signature appears at 1779-1782 (DEAH). Positions 1841 to 2000 (DGFDWITEYE…TLRGPVATFY (160 aa)) constitute a Helicase C-terminal domain. N6-acetyllysine; by host is present on Lys-1883. Residues 2161-2181 (FLTMVEMMVLGLATLGVIWCF) form a helical membrane-spanning segment. The Lumenal portion of the chain corresponds to 2182 to 2189 (VVRTSISR). The segment at residues 2190-2210 (MMLGTLVLLASLLLLWAGGVG) is an intramembrane region (helical). A topological domain (lumenal) is located at residue Tyr-2211. A helical membrane pass occupies residues 2212-2232 (GNMAGVALIFYTLLTVLQPEA). The Cytoplasmic portion of the chain corresponds to 2233 to 2244 (GKQRSSDDNKLA). A helical transmembrane segment spans residues 2245 to 2265 (YFLLTLCSLAGLVAANEMGFL). Residues 2266-2299 (EKTKADLSTALWSEREEPRPWSEWTNVDIQPARS) lie on the Lumenal side of the membrane. Residues 2300–2320 (WGTYVLVVSLFTPYIIHQLQT) constitute an intramembrane region (helical). The Lumenal portion of the chain corresponds to 2321–2343 (KIQQLVNSAVASGAQAMRDLGGG). Positions 2344–2364 (APFFGVAGHVMTLGVVSLIGA) form an intramembrane region, helical. At 2365–2368 (TPTS) the chain is on the lumenal side. The chain crosses the membrane as a helical span at residues 2369 to 2389 (LMVGVGLAALHLAIVVSGLEA). Residues 2390–2432 (ELTQRAHKVFFSAMVRNPMVDGDVINPFGEGEAKPALYERKMS) are Cytoplasmic-facing. The helical transmembrane segment at 2433-2453 (LVLATVLCLMSVVMNRTVASI) threads the bilayer. Topologically, residues 2454–2477 (TEASAVGLAAAGQLLRPEADTLWT) are lumenal. The helical transmembrane segment at 2478-2498 (MPVACGMSGVVRGSLWGFLPL) threads the bilayer. Topologically, residues 2499–3414 (GHRLWLRASG…WELRLESSII (916 aa)) are cytoplasmic. An mRNA cap 0-1 NS5-type MT domain is found at 2512–2776 (GGSEGDTLGD…ELDLGVGTRC (265 aa)). Ser-2567 provides a ligand contact to S-adenosyl-L-methionine. Phosphoserine is present on Ser-2567. Residue Lys-2572 is the For 2'-O-MTase activity of the active site. S-adenosyl-L-methionine-binding residues include Gly-2597, Trp-2598, Thr-2615, Ile-2616, Asp-2642, and Val-2643. Residue Asp-2657 is the For 2'-O-MTase activity of the active site. Ile-2658 is a binding site for S-adenosyl-L-methionine. Active-site for 2'-O-MTase activity residues include Lys-2694 and Glu-2730. The interaction with host SCRIB stretch occupies residues 2730 to 2734 (EMYYS). Residue Tyr-2732 coordinates S-adenosyl-L-methionine. Positions 2950, 2954, 2959, and 2962 each coordinate Zn(2+). The RdRp catalytic domain maps to 3040-3189 (GLFYADDTAG…RPLDDRFGKA (150 aa)). Zn(2+) contacts are provided by His-3224, Cys-3240, and Cys-3359.

This sequence in the N-terminal section; belongs to the class I-like SAM-binding methyltransferase superfamily. mRNA cap 0-1 NS5-type methyltransferase family. As to quaternary structure, homodimer. Interacts (via N-terminus) with host EXOC1 (via C-terminus); this interaction results in EXOC1 degradation through the proteasome degradation pathway. Forms heterodimers with envelope protein E in the endoplasmic reticulum and Golgi. In terms of assembly, homodimer; in the endoplasmic reticulum and Golgi. Interacts with protein prM. Interacts with non-structural protein 1. As to quaternary structure, homodimer; Homohexamer when secreted. Interacts with envelope protein E. Interacts (via N-terminus) with serine protease NS3. In terms of assembly, forms a heterodimer with serine protease NS3. May form homooligomers. As to quaternary structure, forms a heterodimer with NS2B. Interacts with NS4B. Interacts with unphosphorylated RNA-directed RNA polymerase NS5; this interaction stimulates RNA-directed RNA polymerase NS5 guanylyltransferase activity. Interacts with serine protease NS3. Interacts with NS1. In terms of assembly, homodimer. Interacts with host STAT2; this interaction inhibits the phosphorylation of the latter, and, when all viral proteins are present (polyprotein), targets STAT2 for degradation. Interacts with serine protease NS3. Interacts with host SCRIB; this interaction targets NS5 to the cell membrane periphery and nucleus, thereby allowing efficient host nuclear STAT1 inhibition. In terms of processing, specific enzymatic cleavages in vivo yield mature proteins. Cleavages in the lumen of endoplasmic reticulum are performed by host signal peptidase, whereas cleavages in the cytoplasmic side are performed by serine protease NS3. Signal cleavage at the 2K-4B site requires a prior NS3 protease-mediated cleavage at the 4A-2K site. Post-translationally, cleaved in post-Golgi vesicles by a host furin, releasing the mature small envelope protein M, and peptide pr. This cleavage is incomplete as up to 30% of viral particles still carry uncleaved prM. N-glycosylated. In terms of processing, N-glycosylated. The excreted form is glycosylated and this is required for efficient secretion of the protein from infected cells. Post-translationally, acetylated by host KAT5. Acetylation modulates NS3 RNA-binding and unwinding activities and plays an important positive role for viral replication. Phosphorylated on serines residues. This phosphorylation may trigger NS5 nuclear localization.

It localises to the virion. The protein localises to the host nucleus. Its subcellular location is the host cytoplasm. It is found in the host perinuclear region. The protein resides in the secreted. It localises to the virion membrane. The protein localises to the host endoplasmic reticulum membrane. The catalysed reaction is Selective hydrolysis of -Xaa-Xaa-|-Yaa- bonds in which each of the Xaa can be either Arg or Lys and Yaa can be either Ser or Ala.. It catalyses the reaction RNA(n) + a ribonucleoside 5'-triphosphate = RNA(n+1) + diphosphate. It carries out the reaction a ribonucleoside 5'-triphosphate + H2O = a ribonucleoside 5'-diphosphate + phosphate + H(+). The enzyme catalyses ATP + H2O = ADP + phosphate + H(+). The catalysed reaction is a 5'-end (5'-triphosphoguanosine)-ribonucleoside in mRNA + S-adenosyl-L-methionine = a 5'-end (N(7)-methyl 5'-triphosphoguanosine)-ribonucleoside in mRNA + S-adenosyl-L-homocysteine. It catalyses the reaction a 5'-end (N(7)-methyl 5'-triphosphoguanosine)-ribonucleoside in mRNA + S-adenosyl-L-methionine = a 5'-end (N(7)-methyl 5'-triphosphoguanosine)-(2'-O-methyl-ribonucleoside) in mRNA + S-adenosyl-L-homocysteine + H(+). Its function is as follows. Plays a role in virus budding by binding to the cell membrane and gathering the viral RNA into a nucleocapsid that forms the core of a mature virus particle. During virus entry, may induce genome penetration into the host cytoplasm after hemifusion induced by the surface proteins. Can migrate to the cell nucleus where it modulates host functions. In terms of biological role, inhibits RNA silencing by interfering with host Dicer. Functionally, prevents premature fusion activity of envelope proteins in trans-Golgi by binding to envelope protein E at pH6.0. After virion release in extracellular space, gets dissociated from E dimers. Acts as a chaperone for envelope protein E during intracellular virion assembly by masking and inactivating envelope protein E fusion peptide. prM is the only viral peptide matured by host furin in the trans-Golgi network probably to avoid catastrophic activation of the viral fusion activity in acidic Golgi compartment prior to virion release. prM-E cleavage is inefficient, and many virions are only partially matured. These uncleaved prM would play a role in immune evasion. Its function is as follows. May play a role in virus budding. Exerts cytotoxic effects by activating a mitochondrial apoptotic pathway through M ectodomain. May display a viroporin activity. In terms of biological role, binds to host cell surface receptor and mediates fusion between viral and cellular membranes. Envelope protein is synthesized in the endoplasmic reticulum in the form of heterodimer with protein prM. They play a role in virion budding in the ER, and the newly formed immature particle is covered with 60 spikes composed of heterodimer between precursor prM and envelope protein E. The virion is transported to the Golgi apparatus where the low pH causes dissociation of PrM-E heterodimers and formation of E homodimers. prM-E cleavage is inefficient, and many virions are only partially matured. These uncleaved prM would play a role in immune evasion. Functionally, involved in immune evasion, pathogenesis and viral replication. Once cleaved off the polyprotein, is targeted to three destinations: the viral replication cycle, the plasma membrane and the extracellular compartment. Essential for viral replication. Required for formation of the replication complex and recruitment of other non-structural proteins to the ER-derived membrane structures. Excreted as a hexameric lipoparticle that plays a role against host immune response. Antagonizing the complement function. Binds to the host macrophages and dendritic cells. Inhibits signal transduction originating from Toll-like receptor 3 (TLR3). Component of the viral RNA replication complex that functions in virion assembly and antagonizes the host immune response. Its function is as follows. Required cofactor for the serine protease function of NS3. May have membrane-destabilizing activity and form viroporins. In terms of biological role, displays three enzymatic activities: serine protease, NTPase and RNA helicase. NS3 serine protease, in association with NS2B, performs its autocleavage and cleaves the polyprotein at dibasic sites in the cytoplasm: C-prM, NS2A-NS2B, NS2B-NS3, NS3-NS4A, NS4A-2K and NS4B-NS5. NS3 RNA helicase binds RNA and unwinds dsRNA in the 3' to 5' direction. Functionally, regulates the ATPase activity of the NS3 helicase activity. NS4A allows NS3 helicase to conserve energy during unwinding. Functions as a signal peptide for NS4B and is required for the interferon antagonism activity of the latter. Its function is as follows. Induces the formation of ER-derived membrane vesicles where the viral replication takes place. Inhibits interferon (IFN)-induced host STAT1 phosphorylation and nuclear translocation, thereby preventing the establishment of cellular antiviral state by blocking the IFN-alpha/beta pathway. Inhibits STAT2 translocation in the nucleus after IFN-alpha treatment. In terms of biological role, replicates the viral (+) and (-) genome, and performs the capping of genomes in the cytoplasm. NS5 methylates viral RNA cap at guanine N-7 and ribose 2'-O positions. Besides its role in RNA genome replication, also prevents the establishment of cellular antiviral state by blocking the interferon-alpha/beta (IFN-alpha/beta) signaling pathway. Inhibits host TYK2 and STAT2 phosphorylation, thereby preventing activation of JAK-STAT signaling pathway. In Tick-borne encephalitis virus European subtype (strain Neudoerfl) (NEUV), this protein is Genome polyprotein.